A 538-amino-acid polypeptide reads, in one-letter code: Nicotinate phosphoribosyltransferase (538 aa).

Nicotinate-binding residues include Tyr-21 and Thr-210. The residue at position 213 (His-213) is a Phosphohistidine. Arg-318 is a binding site for nicotinate. Thr-380 provides a ligand contact to 5-phospho-alpha-D-ribose 1-diphosphate. Position 537 is a phosphoserine (Ser-537).

It belongs to the NAPRTase family. As to quaternary structure, homodimer. Requires Mg(2+) as cofactor. It depends on Mn(2+) as a cofactor. Transiently phosphorylated on a His residue during the reaction cycle. Phosphorylation strongly increases the affinity for substrates and increases the rate of nicotinate D-ribonucleotide production. Dephosphorylation regenerates the low-affinity form of the enzyme, leading to product release.

Its subcellular location is the cytoplasm. The protein localises to the cytosol. The enzyme catalyses nicotinate + 5-phospho-alpha-D-ribose 1-diphosphate + ATP + H2O = nicotinate beta-D-ribonucleotide + ADP + phosphate + diphosphate. It participates in cofactor biosynthesis; NAD(+) biosynthesis; nicotinate D-ribonucleotide from nicotinate: step 1/1. Functionally, catalyzes the first step in the biosynthesis of NAD from nicotinic acid, the ATP-dependent synthesis of beta-nicotinate D-ribonucleotide from nicotinate and 5-phospho-D-ribose 1-phosphate. Helps prevent cellular oxidative stress via its role in NAD biosynthesis. This Homo sapiens (Human) protein is Nicotinate phosphoribosyltransferase (NAPRT).